A 255-amino-acid chain; its full sequence is Propionicin-F (255 aa).

2 propeptides span residues 1-101 and 145-255; these read MNTK…RVSC and GTPT…DETV.

The protein resides in the secreted. Its function is as follows. Bacteriocin with specific antibacterial activity against strains of P.freudenreichii. No antibacterial activity was detected against P.acidipropionici, P.jensenii and P.thoenii. The sequence is that of Propionicin-F from Propionibacterium freudenreichii subsp. freudenreichii.